Reading from the N-terminus, the 440-residue chain is C4-dicarboxylate TRAP transporter large permease protein DctM (440 aa).

13 consecutive transmembrane segments (helical) span residues 4-24 (LIIF…SISL), 54-74 (FEIM…HGGV), 89-109 (WHGG…AVSG), 112-132 (PATV…QGFP), 148-168 (ILIP…GMVV), 181-201 (VGEL…FLAF), 230-250 (AAWG…GIFT), 255-275 (AAMS…DLTL), 291-311 (MLLY…HEGI), 318-338 (WMVN…ILLL), 349-369 (IVLI…IDPV), 370-390 (HFGI…PVGL), and 410-430 (VWPW…VPAI).

It belongs to the TRAP transporter large permease family. The complex comprises the extracytoplasmic solute receptor protein DctP, and the two transmembrane proteins DctQ and DctM.

It is found in the cell inner membrane. Part of the tripartite ATP-independent periplasmic (TRAP) transport system DctPQM involved in C4-dicarboxylates uptake. The polypeptide is C4-dicarboxylate TRAP transporter large permease protein DctM (Rhodobacter capsulatus (Rhodopseudomonas capsulata)).